A 260-amino-acid polypeptide reads, in one-letter code: Ras-related protein Rab-26 (260 aa).

Residues 1–56 (MSRKKTPKSKGGSEPATSTLPAAAAATNGPRLAHPRTVRPGPEAPPNGPPQSIRPS) form a disordered region. GTP contacts are provided by Ser-76, Gly-77, Val-78, Gly-79, Lys-80, Thr-81, Cys-82, Ser-99, and Thr-100. Thr-81 provides a ligand contact to Mg(2+). 2 short sequence motifs (switch) span residues 90-105 (GAFL…GIDF) and 123-140 (DTAG…YYRD). Residues Thr-100 and Asp-123 each contribute to the Mg(2+) site. GTP contacts are provided by Gly-126, Asn-181, Lys-182, Asp-184, Ala-212, and Arg-213. Residues Cys-257 and Cys-258 are each lipidated (S-geranylgeranyl cysteine).

The protein belongs to the small GTPase superfamily. Rab family. In terms of assembly, interacts with ADRA2B. Interacts with RIMS1. Mg(2+) serves as cofactor. Detected in zymogenic cells in the stomach.

The protein localises to the cytoplasmic vesicle. It is found in the secretory vesicle membrane. It localises to the golgi apparatus membrane. It carries out the reaction GTP + H2O = GDP + phosphate + H(+). Regulated by guanine nucleotide exchange factors (GEFs) which promote the exchange of bound GDP for free GTP. Regulated by GTPase activating proteins (GAPs) which increase the GTP hydrolysis activity. Inhibited by GDP dissociation inhibitors (GDIs). In terms of biological role, the small GTPases Rab are key regulators of intracellular membrane trafficking, from the formation of transport vesicles to their fusion with membranes. Rabs cycle between an inactive GDP-bound form and an active GTP-bound form that is able to recruit to membranes different set of downstream effectors directly responsible for vesicle formation, movement, tethering and fusion. RAB26 mediates transport of ADRA2A and ADRA2B from the Golgi to the cell membrane. Plays a role in the maturation of zymogenic granules and in pepsinogen secretion in the stomach. Plays a role in the secretion of amylase from acinar granules in the parotid gland. The sequence is that of Ras-related protein Rab-26 from Mus musculus (Mouse).